Reading from the N-terminus, the 377-residue chain is MMARPWNFSAGPSALPEAVLQQAAAEMLDWHGSGMSVMEMSHRGKHFVQICDEAEADLRELLGLPADYAVMFMQGGGLGENAIVPMNLMGRRSTPAADFVVTGHWSTRSHKEAGRYGDAQIAASAAEATEIDGQAQSSWTWLPPVDTWRVRKDSAYLHLCSNETIGGVEFTEWPDPASLGAPDVPLVVDVSSHFLSRPLDIARAGLVFAGAQKNAGPAGVTVVIARRDLLGHALPICPSAFDYANVAADHSRYNTPPTFAIYVMGLVFKWIKAHGGVRGMEEANRAKAELLYGYLDGSAFYRNPVQPAVRSRMNVPFVLRDESLNDAFLQGAEAAGLMQLKGHKSVGGMRASIYNAMPLAGVQALIDYLKEFERRHG.

An L-glutamate-binding site is contributed by Arg43. Pyridoxal 5'-phosphate contacts are provided by Trp105, Thr164, Asp189, and Gln212. N6-(pyridoxal phosphate)lysine is present on Lys213. 254 to 255 (NT) contacts pyridoxal 5'-phosphate.

Belongs to the class-V pyridoxal-phosphate-dependent aminotransferase family. SerC subfamily. Homodimer. The cofactor is pyridoxal 5'-phosphate.

The protein resides in the cytoplasm. The enzyme catalyses O-phospho-L-serine + 2-oxoglutarate = 3-phosphooxypyruvate + L-glutamate. The catalysed reaction is 4-(phosphooxy)-L-threonine + 2-oxoglutarate = (R)-3-hydroxy-2-oxo-4-phosphooxybutanoate + L-glutamate. It participates in amino-acid biosynthesis; L-serine biosynthesis; L-serine from 3-phospho-D-glycerate: step 2/3. It functions in the pathway cofactor biosynthesis; pyridoxine 5'-phosphate biosynthesis; pyridoxine 5'-phosphate from D-erythrose 4-phosphate: step 3/5. Functionally, catalyzes the reversible conversion of 3-phosphohydroxypyruvate to phosphoserine and of 3-hydroxy-2-oxo-4-phosphonooxybutanoate to phosphohydroxythreonine. The polypeptide is Phosphoserine aminotransferase (Bordetella bronchiseptica (strain ATCC BAA-588 / NCTC 13252 / RB50) (Alcaligenes bronchisepticus)).